Consider the following 214-residue polypeptide: Pyridoxine/pyridoxamine 5'-phosphate oxidase (214 aa).

Substrate-binding positions include 8-11 and lysine 66; that span reads RINY. FMN contacts are provided by residues 61 to 66, 76 to 77, arginine 82, lysine 83, and glutamine 105; these read RIVLIK and FT. 3 residues coordinate substrate: tyrosine 123, arginine 127, and serine 131. FMN contacts are provided by residues 140–141 and tryptophan 184; that span reads QS. Residue 190-192 participates in substrate binding; it reads RLH. Arginine 194 serves as a coordination point for FMN.

Belongs to the pyridoxamine 5'-phosphate oxidase family. As to quaternary structure, homodimer. The cofactor is FMN.

The catalysed reaction is pyridoxamine 5'-phosphate + O2 + H2O = pyridoxal 5'-phosphate + H2O2 + NH4(+). The enzyme catalyses pyridoxine 5'-phosphate + O2 = pyridoxal 5'-phosphate + H2O2. It participates in cofactor metabolism; pyridoxal 5'-phosphate salvage; pyridoxal 5'-phosphate from pyridoxamine 5'-phosphate: step 1/1. Its pathway is cofactor metabolism; pyridoxal 5'-phosphate salvage; pyridoxal 5'-phosphate from pyridoxine 5'-phosphate: step 1/1. Catalyzes the oxidation of either pyridoxine 5'-phosphate (PNP) or pyridoxamine 5'-phosphate (PMP) into pyridoxal 5'-phosphate (PLP). The polypeptide is Pyridoxine/pyridoxamine 5'-phosphate oxidase (Burkholderia cenocepacia (strain HI2424)).